The sequence spans 192 residues: MAEPVLVVGLGNPGPQYATTRHNAGFMVVDILADRMGEKFKVHKKSGAEVATGRLAGRPVVLAKPRVYMNESGRQVGPLAKFYSVAPADVVIVHDELDIDFGRIRLKAGGGVAGHNGLRSVASALGGNDFQRVRVGIGRPPGHKSGASFVLENFNSVERKEVPTILEQAADATELLVAQGLEPAQNTVHAWG.

Y17 lines the tRNA pocket. The Proton acceptor role is filled by H22. TRNA is bound by residues Y68, N70, and N116.

It belongs to the PTH family. As to quaternary structure, monomer.

It localises to the cytoplasm. It carries out the reaction an N-acyl-L-alpha-aminoacyl-tRNA + H2O = an N-acyl-L-amino acid + a tRNA + H(+). Functionally, hydrolyzes ribosome-free peptidyl-tRNAs (with 1 or more amino acids incorporated), which drop off the ribosome during protein synthesis, or as a result of ribosome stalling. Catalyzes the release of premature peptidyl moieties from peptidyl-tRNA molecules trapped in stalled 50S ribosomal subunits, and thus maintains levels of free tRNAs and 50S ribosomes. The sequence is that of Peptidyl-tRNA hydrolase from Mycolicibacterium vanbaalenii (strain DSM 7251 / JCM 13017 / BCRC 16820 / KCTC 9966 / NRRL B-24157 / PYR-1) (Mycobacterium vanbaalenii).